The chain runs to 257 residues: Trans-aconitate 2-methyltransferase (257 aa).

It belongs to the methyltransferase superfamily. Tam family.

It localises to the cytoplasm. It catalyses the reaction trans-aconitate + S-adenosyl-L-methionine = (E)-3-(methoxycarbonyl)pent-2-enedioate + S-adenosyl-L-homocysteine. Catalyzes the S-adenosylmethionine monomethyl esterification of trans-aconitate. The protein is Trans-aconitate 2-methyltransferase of Rhizobium meliloti (strain 1021) (Ensifer meliloti).